The sequence spans 320 residues: Probable cell division protein WhiA (320 aa).

The segment at residues 276–310 is a DNA-binding region (H-T-H motif); that stretch reads TLKELGELVSGGKISKSGINHRLRKIDEIAERLRA.

Belongs to the WhiA family.

Its function is as follows. Involved in cell division and chromosome segregation. In Geobacillus sp. (strain WCH70), this protein is Probable cell division protein WhiA.